Here is a 257-residue protein sequence, read N- to C-terminus: Lipid A 4'-phosphatase (257 aa).

6 helical membrane-spanning segments follow: residues 21 to 41, 85 to 105, 119 to 139, 174 to 194, 201 to 221, and 225 to 245; these read FGAF…FRAF, IFFR…IECY, KLKV…NVIL, CSFV…LLFV, ALVP…LSFG, and LSDV…LLAL.

The protein belongs to the lipid A LpxF 4'-phosphatase family.

Its subcellular location is the cell inner membrane. It participates in bacterial outer membrane biogenesis; LPS lipid A biosynthesis. Probably removes the 4'-phosphate moiety from lipid A species. Not seen to act on other membrane components, nor does it dephosphorylate the 1-phosphate group of lipid A and/or lipid A precursors. This Rhizobium etli (strain ATCC 51251 / DSM 11541 / JCM 21823 / NBRC 15573 / CFN 42) protein is Lipid A 4'-phosphatase.